The chain runs to 509 residues: MLPALKKGGRPRDALGRFIRHHERLPVSLADTRGVLFVVSEMADFIKAGGLGDVAAALPRALRHRYDVRVLIPGYRAVLERAGKVEIVGRVLAHAALPACDIGRIVQSDGLPIYILLSRELFERDGSPYVSTSGSEFEDNAIRFATLSHAAADIAAGHAGLGWKPRLLHLNDWPCALAAGYVRWSGGTTPCLLTIHNLAYQGLVPYSMAGALGIPAERVAELEFYGQMSFLRGGIVNADHVNTVSVSYAKQITGPAQGCGLDRLLAGRAAKGVLTGIVNGIDASWDPRTDEYLDSHFSVNQWQGRQDNAAQVRKAFGLRESTGPLFAVVSRLVHQKGLDLICEVAPQIVAAGGQIAVIGGGEPDIERQVAELTRRYPGQVGAFIGFEEGLARRMFAGADFLLMPSRFEPCGLSQMYAQRFGCLPIAHATGGLIDTVDDGVTGFLFQHASVEALRRCLERAFRTFRLPGLLAAMRRAAMLRPSGWDVAGNKYLSLYERTAAIAPALATVS.

An ADP-alpha-D-glucose-binding site is contributed by Lys-47.

Belongs to the glycosyltransferase 1 family. Bacterial/plant glycogen synthase subfamily.

The catalysed reaction is [(1-&gt;4)-alpha-D-glucosyl](n) + ADP-alpha-D-glucose = [(1-&gt;4)-alpha-D-glucosyl](n+1) + ADP + H(+). It participates in glycan biosynthesis; glycogen biosynthesis. In terms of biological role, synthesizes alpha-1,4-glucan chains using ADP-glucose. The sequence is that of Glycogen synthase from Xanthomonas oryzae pv. oryzae (strain PXO99A).